We begin with the raw amino-acid sequence, 369 residues long: Putative gustatory receptor 39b (369 aa).

The Cytoplasmic segment spans residues 1 to 32 (MLYSFHPYLKYFALLGLVPWSESCAQSKFVQK). Residues 33–53 (VYSAILIILNAVHFGISIYFP) form a helical membrane-spanning segment. The Extracellular segment spans residues 54–59 (QSAELF). Residues 60–80 (LSLMVNVIVFVARIVCVTVII) traverse the membrane as a helical segment. Residues 81–122 (LQVMVHYDDYFRFCREMKYLGLRLQCELKIHVGRLKWQSYAK) are Cytoplasmic-facing. Residues 123–143 (ILALGIGFLVTVLPSIYVALS) traverse the membrane as a helical segment. Residues 144 to 147 (GSLL) lie on the Extracellular side of the membrane. The helical transmembrane segment at 148–168 (YFWSSLLSILIIRMQFVLVLL) threads the bilayer. The Cytoplasmic portion of the chain corresponds to 169 to 224 (NVELLGHHVSLLGIRLQNVLECHLMGANCTLDGNANRLCSLEFLLALKQSHMQLHY). Residues 225–245 (LFTHFNDLFGWSILGTYVVLF) form a helical membrane-spanning segment. The Extracellular segment spans residues 246–265 (SDSTVNIYWTQQVLVEVYEY). Residues 266–286 (KYLYATFSVFVPSFFNILVFC) traverse the membrane as a helical segment. Residues 287-348 (RCGEFCQRQS…EGFMSTDNSL (62 aa)) lie on the Cytoplasmic side of the membrane. Residues 349–368 (LMSILAAKVTYLIVLMQFSS) form a helical membrane-spanning segment. A topological domain (extracellular) is located at residue Val-369.

This sequence belongs to the insect chemoreceptor superfamily. Gustatory receptor (GR) family. Gr2a subfamily. In terms of tissue distribution, expressed in the adult labellar chemosensory neurons and in abdominal ganglions. In larvae, is expressed in neurons of the dorsal and posterior pharyngeal sense organs.

It localises to the cell membrane. Functionally, probable gustatory receptor which mediates acceptance or avoidance behavior, depending on its substrates. Has also atypical sensory function in organ not limited to conventional taste sensing like abdominal ganglions. The polypeptide is Putative gustatory receptor 39b (Gr39b) (Drosophila melanogaster (Fruit fly)).